We begin with the raw amino-acid sequence, 440 residues long: MSLITDIYAREVLDSRGNPTVEAEVYTEAGGVGRGIVPSGASTGEHEAVELRDGDKDRFGGKGVLKAVANVNNVIAKEIVGMEVTDQIAIDKAMIALDGTPNKGKLGANAILAVSLATARAAADELQVPLYNYLGGFNAHVMPTPMMNVINGGAHSDNKVDFQEFMIMPVGAPTVREAIRMGSETFHALKKALEADGKVTSVGDEGGFAPDFANNEEPFEYLIKAIEAAGYKPGKDVAIAFDVAASELWNDEDKKYKLHWSTGEEYTTEEWIEYLSDIIAKYPVVSVEDPIDENNWDDWVTLTNKLGKKVQLVGDDFFVTNTDYLAKGIKMGAANSILIKLNQIGTLTETVEAIEMAKEAGYTAIVSHRSGETEDTTIADLVVATNAGQIKTGSMSRTDRLAKYNQLMRIEDNLGDVAKYKGIRSFYNLSEQAKQDIENR.

Gln-163 contacts (2R)-2-phosphoglycerate. The active-site Proton donor is Glu-205. The Mg(2+) site is built by Asp-242, Glu-288, and Asp-315. Positions 340, 369, 370, and 391 each coordinate (2R)-2-phosphoglycerate. Lys-340 (proton acceptor) is an active-site residue.

This sequence belongs to the enolase family. Requires Mg(2+) as cofactor.

The protein resides in the cytoplasm. It is found in the secreted. The protein localises to the cell surface. It catalyses the reaction (2R)-2-phosphoglycerate = phosphoenolpyruvate + H2O. It functions in the pathway carbohydrate degradation; glycolysis; pyruvate from D-glyceraldehyde 3-phosphate: step 4/5. Catalyzes the reversible conversion of 2-phosphoglycerate (2-PG) into phosphoenolpyruvate (PEP). It is essential for the degradation of carbohydrates via glycolysis. The protein is Enolase of Limosilactobacillus fermentum (strain NBRC 3956 / LMG 18251) (Lactobacillus fermentum).